An 83-amino-acid polypeptide reads, in one-letter code: Small cysteine-rich protein 3 (83 aa).

The first 21 residues, 1 to 21 (MGVKLNICLLLLLVAIISSQG), serve as a signal peptide directing secretion. A propeptide spanning residues 22-39 (FNLRKKEDSKDEKPFGNY) is cleaved from the precursor. Residues 25–35 (RKKEDSKDEKP) are compositionally biased toward basic and acidic residues. Residues 25–44 (RKKEDSKDEKPFGNYRRGSP) are disordered.

Belongs to the Cnidaria small cysteine-rich protein (SCRiP) family. alpha subfamily. In terms of processing, contains 4 disulfide bonds.

The protein resides in the secreted. It is found in the nematocyst. In terms of biological role, this recombinant protein induces severe neurotoxicity on zebrafish larvae (Danio rerio) at a concentration of 230 mg/ml, but does not show toxicity when injected in blowfly larvae (Sarcophaga falculata). All fish incubated with this protein died within 16 hours of exposure. Has also been claimed to be implied in calcification, but this function seems improbable. The protein is Small cysteine-rich protein 3 of Acropora millepora (Staghorn coral).